We begin with the raw amino-acid sequence, 453 residues long: Protein amnionless (453 aa).

A signal peptide spans 1 to 19; the sequence is MGVLGRVLLWLQLCALTQA. The Extracellular segment spans residues 20-357; that stretch reads VSKLWVPNTD…ESGAHVWGSS (338 aa). The N-linked (GlcNAc...) asparagine glycan is linked to asparagine 35. 6 disulfides stabilise this stretch: cysteine 43/cysteine 96, cysteine 137/cysteine 213, cysteine 205/cysteine 211, cysteine 223/cysteine 249, cysteine 234/cysteine 250, and cysteine 239/cysteine 253. The interval 67–87 is interaction with CUBN; the sequence is SDMLLPLDGELVLASGAGFGV. A VWFC domain is found at 202–254; it reads PEDCADPSGCVCGNAEAQPWICAALLQPLGGRCPQAACHSALRPQGQCCDLCG. Residues 358–378 form a helical membrane-spanning segment; sequence AAGLAGGVAAAVLLALLVLLV. Over 379–453 the chain is Cytoplasmic; it reads APPLLRRAGR…PLFAGAEAEA (75 aa).

In terms of assembly, interacts (via extracellular region) with CUBN/cubilin, giving rise to a huge complex containing one AMN chain and three CUBN chains. Post-translationally, N-glycosylated. In terms of processing, a soluble form arises by proteolytic removal of the membrane anchor. Detected in proximal tubules in the kidney cortex (at protein level). Long isoforms are highly expressed in small intestine, colon and kidney (renal proximal tubule epithelial cells). Shorter isoforms are detected at lower levels in testis, thymus and peripheral blood leukocytes.

It is found in the apical cell membrane. The protein localises to the cell membrane. Its subcellular location is the endosome membrane. The protein resides in the membrane. It localises to the coated pit. It is found in the secreted. In terms of biological role, membrane-bound component of the endocytic receptor formed by AMN and CUBN. Required for normal CUBN glycosylation and trafficking to the cell surface. The complex formed by AMN and CUBN is required for efficient absorption of vitamin B12. Required for normal CUBN-mediated protein transport in the kidney. This chain is Protein amnionless (AMN), found in Homo sapiens (Human).